The primary structure comprises 547 residues: RING finger protein ETP1 homolog (547 aa).

The RING-type zinc finger occupies 208–248; it reads CVVCLERMDSSITGLITIVCQHTFHCPCLQKWGNSSCPVCR. The UBP-type; degenerate zinc-finger motif lies at 245-338; the sequence is PVCRYTQKVQ…GKLVELSTDG (94 aa). Zn(2+) contacts are provided by cysteine 262, cysteine 265, cysteine 274, cysteine 277, cysteine 282, histidine 289, histidine 293, and histidine 299. Polar residues predominate over residues 514–523; sequence LPNNSTVRSN. Residues 514–547 are disordered; the sequence is LPNNSTVRSNSVKSKKKKKKKPVVPSSSGSLGTD. Residues 526–535 are compositionally biased toward basic residues; the sequence is KSKKKKKKKP.

It is found in the cytoplasm. Its function is as follows. May act as a cytoplasmic retention protein with a role in regulating nuclear transport. This chain is RING finger protein ETP1 homolog, found in Schizosaccharomyces pombe (strain 972 / ATCC 24843) (Fission yeast).